A 201-amino-acid chain; its full sequence is MLEAIKTFMILYTGMFAITNPIGAVPVFMSVVGHLPAEIKHEVAKKVSITVFITLTVFALVGQWIFKFFGSSIDAFAIAGGILLFRMGMEMLSGKLSSVKIDEEDVTLEEVAVIPLAIPLISGPGAITTVMLYMTKESPGIVILTIIAIGLTTYGILYSGNKIIERLGRVGVKVTTRMMGLILTSMAMQMIINGIKGAFGI.

Helical transmembrane passes span 8–28 (FMILYTGMFAITNPIGAVPVF), 49–69 (ITVFITLTVFALVGQWIFKFF), 73–93 (IDAFAIAGGILLFRMGMEMLS), 111–131 (VAVIPLAIPLISGPGAITTVM), 140–160 (GIVILTIIAIGLTTYGILYSG), and 181–201 (LILTSMAMQMIINGIKGAFGI).

This sequence belongs to the UPF0056 (MarC) family.

It is found in the cell membrane. This chain is UPF0056 membrane protein PH0760, found in Pyrococcus horikoshii (strain ATCC 700860 / DSM 12428 / JCM 9974 / NBRC 100139 / OT-3).